The following is a 218-amino-acid chain: uncharacterized protein (218 aa).

It belongs to the glycosyltransferase 2 family.

This is an uncharacterized protein from Mycobacterium bovis (strain ATCC BAA-935 / AF2122/97).